A 128-amino-acid chain; its full sequence is Small ribosomal subunit protein uS13 (128 aa).

Residues 97-128 (PVRGQRTRSNARTRKGPRPSRIKTKKKKEQTV) are disordered. Residues 101–128 (QRTRSNARTRKGPRPSRIKTKKKKEQTV) show a composition bias toward basic residues.

Belongs to the universal ribosomal protein uS13 family. Part of the 30S ribosomal subunit. Forms a loose heterodimer with protein S19. Forms two bridges to the 50S subunit in the 70S ribosome.

Functionally, located at the top of the head of the 30S subunit, it contacts several helices of the 16S rRNA. In the 70S ribosome it contacts the 23S rRNA (bridge B1a) and protein L5 of the 50S subunit (bridge B1b), connecting the 2 subunits; these bridges are implicated in subunit movement. Contacts the tRNAs in the A and P-sites. The chain is Small ribosomal subunit protein uS13 from Pseudothermotoga lettingae (strain ATCC BAA-301 / DSM 14385 / NBRC 107922 / TMO) (Thermotoga lettingae).